A 311-amino-acid polypeptide reads, in one-letter code: Acetyl-coenzyme A carboxylase carboxyl transferase subunit alpha (311 aa).

A CoA carboxyltransferase C-terminal domain is found at 32 to 289; the sequence is ELNLLEERLR…KSVLEQKLAQ (258 aa).

It belongs to the AccA family. Acetyl-CoA carboxylase is a heterohexamer composed of biotin carboxyl carrier protein (AccB), biotin carboxylase (AccC) and two subunits each of ACCase subunit alpha (AccA) and ACCase subunit beta (AccD).

Its subcellular location is the cytoplasm. The enzyme catalyses N(6)-carboxybiotinyl-L-lysyl-[protein] + acetyl-CoA = N(6)-biotinyl-L-lysyl-[protein] + malonyl-CoA. It participates in lipid metabolism; malonyl-CoA biosynthesis; malonyl-CoA from acetyl-CoA: step 1/1. Functionally, component of the acetyl coenzyme A carboxylase (ACC) complex. First, biotin carboxylase catalyzes the carboxylation of biotin on its carrier protein (BCCP) and then the CO(2) group is transferred by the carboxyltransferase to acetyl-CoA to form malonyl-CoA. In Exiguobacterium sibiricum (strain DSM 17290 / CCUG 55495 / CIP 109462 / JCM 13490 / 255-15), this protein is Acetyl-coenzyme A carboxylase carboxyl transferase subunit alpha.